The chain runs to 394 residues: MGGAAARLGAVILFVVIVGLHGVRGKYALADASLKMADPNRFRGKDLPVLDQLTDPPGVRRVYHIQAGLPDPFQPPSLPITVYYAVLERACRSVLLNAPSEAPQIVRGASEDVRKQPYNLTIAWFRMGGNCAIPITVMEYTECSYNKSLGACPIRTQPRWNYYDSFSAVSEDNLGFLMHAPAFETAGTYLRLVKINDWTEITQFILEHRAKGSCKYALPLRIPPSACLSPQAYQQGVTVDSIGMLPRFIPENQRTVAVYSLKIAGWHGPKAPYTSTLLPPELSETPNATQPELAPEDPEDSALLEDPVGTVAPQIPPNWHIPSIQDAATPYHPPATPNNMGLIAGAVGGSLLAALVICGIVYWMHRRTRKAPKRIRLPHIREDDQPSSHQPLFY.

The signal sequence occupies residues 1 to 25 (MGGAAARLGAVILFVVIVGLHGVRG). Residues 26 to 57 (KYALADASLKMADPNRFRGKDLPVLDQLTDPP) are interaction with TNFRSF14. The Virion surface portion of the chain corresponds to 26–340 (KYALADASLK…YHPPATPNNM (315 aa)). His64 contacts Zn(2+). 3 disulfides stabilise this stretch: Cys91–Cys214, Cys131–Cys227, and Cys143–Cys152. Residues Asn119 and Asn146 are each glycosylated (N-linked (GlcNAc...) asparagine; by host). Residue Asp240 coordinates Zn(2+). Positions 261–305 (LKIAGWHGPKAPYTSTLLPPELSETPNATQPELAPEDPEDSALLE) are profusion. Positions 275 to 301 (STLLPPELSETPNATQPELAPEDPEDS) are disordered. A glycan (N-linked (GlcNAc...) asparagine; by host) is linked at Asn287. Residues 341–361 (GLIAGAVGGSLLAALVICGIV) form a helical membrane-spanning segment. Residues 362-394 (YWMHRRTRKAPKRIRLPHIREDDQPSSHQPLFY) lie on the Intravirion side of the membrane.

This sequence belongs to the herpesviridae glycoprotein D family. As to quaternary structure, homodimer. Interacts with host receptor TNFRSF14. Interacts with host receptor NECTIN1. Mutant Rid1 interacts with host receptor NECTIN2. Interacts (via profusion domain) with gB; this interaction occurs in the absence of gH/gL. Interacts (via profusion domain) with gH/gL heterodimer; this interaction occurs in the absence of gB. Associates with the gB-gH/gL-gD complex. Interacts (via C-terminus) with UL11 tegument protein. Interacts (via C-terminus) with VP22 tegument protein; this interaction might be very weak. Interacts with host RSAD2.

The protein resides in the virion membrane. It is found in the host Golgi apparatus. In terms of biological role, envelope glycoprotein that binds to the host cell entry receptors NECTIN1, TNFRSF14/HVEM and 3-O-sulfated heparan sulfate, promoting the virus entry into host cells. May trigger fusion with host membrane, by recruiting the fusion machinery composed of gB and gH/gL. This Human herpesvirus 1 (strain KOS) (HHV-1) protein is Envelope glycoprotein D (gD).